We begin with the raw amino-acid sequence, 338 residues long: UPF0284 protein TV0153 (338 aa).

It belongs to the UPF0284 family.

This Thermoplasma volcanium (strain ATCC 51530 / DSM 4299 / JCM 9571 / NBRC 15438 / GSS1) protein is UPF0284 protein TV0153.